The chain runs to 378 residues: TelA-like protein SAB1262 (378 aa).

Belongs to the TelA family.

The protein is TelA-like protein SAB1262 of Staphylococcus aureus (strain bovine RF122 / ET3-1).